The following is a 492-amino-acid chain: Virion host shutoff protein (492 aa).

Disordered stretches follow at residues 110 to 130 (EEAS…SRPS), 288 to 307 (SQAR…LESM), and 334 to 371 (EDDY…ELVQ).

The protein belongs to the herpesviridae VHS protein family. In terms of assembly, interacts with human EIF4H, EIF4A1 and EIF4A2; interaction with eIF4AI and EIF4A2 presumably allows Vhs protein to associate with the eIF4F cap-binding complex.

It localises to the virion. Functionally, minor structural protein that acts as an endoribonuclease during lytic infection. Degrades host mRNAs in the cytoplasm by cutting them at preferred sites, including some in regions of translation initiation. Together with inhibition of host splicing by ICP27, contributes to an overall decrease in host protein synthesis. Also, after the onset of viral transcription, accelerates the turnover of viral mRNA, thereby facilitating the sequential expression of different classes of viral genes. Binds translation initiation factors eIF4H, eIF4AI, and eIF4AII, thereby may interact directly with the translation initiation complex and thus digest specifically mRNAs. Also impedes antigen presentation by major histocompatibility complex class I and class II molecules, inhibits secretion of cytokines that would otherwise recruit lymphocytes and neutrophils cells to the site of infection and blocks the activation of dendritic cells. Impedes the alpha/beta interferon-mediated response to infection. Inhibits the integrated stress response (ISR) in the infected cell, this function requires the endonuclease activity. Stress granule formation is thus inhibited, which allows protein synthesis and viral replication. The polypeptide is Virion host shutoff protein (UL41) (Homo sapiens (Human)).